A 266-amino-acid chain; its full sequence is uncharacterized protein (266 aa).

This is an uncharacterized protein from Mycobacterium tuberculosis (strain CDC 1551 / Oshkosh).